We begin with the raw amino-acid sequence, 325 residues long: GTPase Era (325 aa).

The 169-residue stretch at 30–198 (HCGFVAIVGR…KKHVRDHLPK (169 aa)) folds into the Era-type G domain. Positions 38–45 (GRPNVGKS) are G1. 38–45 (GRPNVGKS) is a GTP binding site. The G2 stretch occupies residues 64-68 (QTTRH). Positions 85–88 (DTPG) are G3. GTP contacts are provided by residues 85–89 (DTPGL) and 147–150 (NKVD). The G4 stretch occupies residues 147–150 (NKVD). The tract at residues 177–179 (ISA) is G5. Residues 221–307 (VREKLMRFTG…YLETWVKVKS (87 aa)) form the KH type-2 domain.

Belongs to the TRAFAC class TrmE-Era-EngA-EngB-Septin-like GTPase superfamily. Era GTPase family. In terms of assembly, monomer.

It localises to the cytoplasm. It is found in the cell inner membrane. Functionally, an essential GTPase that binds both GDP and GTP, with rapid nucleotide exchange. Plays a role in 16S rRNA processing and 30S ribosomal subunit biogenesis and possibly also in cell cycle regulation and energy metabolism. The protein is GTPase Era of Vibrio cholerae serotype O1 (strain ATCC 39315 / El Tor Inaba N16961).